The following is a 577-amino-acid chain: PTS system lactose-specific EIICB component (577 aa).

One can recognise a PTS EIIC type-3 domain in the interval 4–405; the sequence is VFDKLKPVFE…VLDVAIYFPF (402 aa). 9 consecutive transmembrane segments (helical) span residues 27 to 47, 63 to 83, 100 to 120, 133 to 153, 176 to 196, 219 to 239, 280 to 300, 326 to 346, and 386 to 406; these read GFIA…VAYV, LMVA…GTTA, INPV…SILP, QGLI…YVCI, LIPM…FKAA, YLGL…GVQG, VMNF…LFAA, FGMP…TPIV, and LAFV…FPFI. Positions 476–577 constitute a PTS EIIB type-3 domain; that stretch reads EVDVLVLCAG…MALDFVESNL (102 aa). Cysteine 483 functions as the Phosphocysteine intermediate; for EIIB activity in the catalytic mechanism. Cysteine 483 carries the phosphocysteine; by EIIA modification.

It localises to the cell membrane. It carries out the reaction lactose(out) + N(pros)-phospho-L-histidyl-[protein] = lactose 6-phosphate(in) + L-histidyl-[protein]. In terms of biological role, the phosphoenolpyruvate-dependent sugar phosphotransferase system (sugar PTS), a major carbohydrate active transport system, catalyzes the phosphorylation of incoming sugar substrates concomitantly with their translocation across the cell membrane. The enzyme II LacEF PTS system is involved in lactose transport. The sequence is that of PTS system lactose-specific EIICB component from Lacticaseibacillus casei (Lactobacillus casei).